Consider the following 201-residue polypeptide: Transgelin (201 aa).

Ala2 is subject to N-acetylalanine. One can recognise a Calponin-homology (CH) domain in the interval 24-137 (EELEERLVEW…RTVMALGSLA (114 aa)). Positions 154–161 (KKAQEHKR) are could be involved in actin-binding. Ser166 is modified (phosphoserine). The residue at position 172 (Lys172) is an N6-acetyllysine. One copy of the Calponin-like repeat lies at 175-200 (IGLQMGSNRGASQAGMTGYGRPRQII). Position 181 is a phosphoserine (Ser181). An Omega-N-methylarginine modification is found at Arg183.

This sequence belongs to the calponin family. Smooth muscle and mesenchymal cells but not in skeletal muscle or lymphocytes.

It localises to the cytoplasm. Functionally, actin cross-linking/gelling protein. The chain is Transgelin (Tagln) from Rattus norvegicus (Rat).